The chain runs to 403 residues: Cystinosin homolog (403 aa).

The Lumenal portion of the chain corresponds to 1-122 (MKLPVSILFF…YSRITVIRSH (122 aa)). N-linked (GlcNAc...) asparagine glycans are attached at residues N45, N52, N78, and N96. The chain crosses the membrane as a helical span at residues 123–143 (WLAILIQIVGWTYFAAWSVSF). In terms of domain architecture, PQ-loop 1 spans 124–190 (LAILIQIVGW…MYYNSHVKNI (67 aa)). Residues 144–162 (YPQMYLNFKRKSVVGLNFD) are Cytoplasmic-facing. The helical transmembrane segment at 163-183 (FLSLNLVGFGAYAMFNLLMYY) threads the bilayer. The Lumenal segment spans residues 184–206 (NSHVKNIYSMENPRSPPPVLLND). The chain crosses the membrane as a helical span at residues 207 to 227 (VVFAVHAFLACFVTILQCIFY). Over 228–237 (ERDQQRISTK) the chain is Cytoplasmic. A helical transmembrane segment spans residues 238-258 (CIILIIGLVSFGFVSVVVTVL). Topologically, residues 259 to 260 (NK) are lumenal. The chain crosses the membrane as a helical span at residues 261 to 283 (ITILDFVVSLSYIKMAVTCCKYF). The PQ-loop 2 domain occupies 266–326 (FVVSLSYIKM…MVLQAINVND (61 aa)). Over 284–294 (PQAYFNYQRKS) the chain is Cytoplasmic. A helical transmembrane segment spans residues 295–315 (TVGWSIGNILLDFTGGSLDIL). Over 316 to 336 (QMVLQAINVNDWSAFYANPVK) the chain is Lumenal. The helical transmembrane segment at 337-357 (FGLGFVSIFFDIIFMIQHYAL) threads the bilayer. The Cytoplasmic segment spans residues 358–403 (YPDAEVPHNEYHGVDNPDPDSIVRDAEHGAADNESMESTDPIIVHD). Residues 374–388 (PDPDSIVRDAEHGAA) show a composition bias toward basic and acidic residues. The tract at residues 374–403 (PDPDSIVRDAEHGAADNESMESTDPIIVHD) is disordered.

This sequence belongs to the cystinosin family.

The protein resides in the lysosome membrane. It is found in the cytoplasmic vesicle. The protein localises to the phagosome. The enzyme catalyses L-cystine(out) + H(+)(out) = L-cystine(in) + H(+)(in). Its function is as follows. Cystine/H(+) symporter that mediates export of cystine, the oxidized dimer of cysteine, from lysosomes. May play a role in the degradation of engulfed apoptotic cells. The sequence is that of Cystinosin homolog (ctns-1) from Caenorhabditis briggsae.